We begin with the raw amino-acid sequence, 583 residues long: MKSIPIILLVLIGLLLASVYSHDILITEKGQKSLDKLDKAAATTLQHGENIQLSCDVCQIGASLLEDFIKKNASLTEIIKGLSDLCIASKEEQPEVCTGILNNYVPIIVDVLIQSDFTPSQLCGYFKICSATGSSESSSISNSFDNEYRQESFNKPTMKVNKKPQYKDLSNQEPLVKKFKGNDSIGYILQISDVHFDPDYKVGSNPNCGRPLCCRDGVGSAGPIGHYLCDIPFSTVELIFQHLATLTDQLDFIVWTGDNPPHNVWEQSQAQQELATATLAQVIQKTFPNTPVLPSLGNHEAYPADQYVLPNSQWLLDSIYTYWAPWLDADALELVKERGYYTSLIKPGLRVMSLNTLENDMINFYNLLPTYLKGPNNQSDWMINTLEQAQSNGEKVLIIGHIPCTVKSASTDGWCAMYEQVVGQFSDVIIGQLYGHTHYDQFSVFSDVATHTIPTGMNYIVPSLTTYQNHEPGYRIYQFDYSTNQIVNYYQYHANITEANETGALNFQLTYSAKELYNMDDLSPTSWTKVANQMKTNSTMFNSYFENLSSSPIKESCDQACQTKWICQIFGITSSEFDKCYGV.

An N-terminal signal peptide occupies residues 1 to 21; it reads MKSIPIILLVLIGLLLASVYS. The Saposin B-type domain maps to 51-133; the sequence is IQLSCDVCQI…GYFKICSATG (83 aa). 3 disulfide bridges follow: Cys-55-Cys-129, Cys-58-Cys-123, and Cys-86-Cys-97. An N-linked (GlcNAc...) asparagine glycan is attached at Asn-72. Asn-182 is a glycosylation site (N-linked (GlcNAc...) asparagine). 2 residues coordinate Zn(2+): Asp-193 and His-195. A disulfide bond links Cys-214 and Cys-229. Asp-258 and Asn-298 together coordinate Zn(2+). Residue Asn-377 is glycosylated (N-linked (GlcNAc...) asparagine). Zn(2+)-binding residues include His-401, His-436, and His-438. Asn-495, Asn-500, Asn-537, and Asn-547 each carry an N-linked (GlcNAc...) asparagine glycan. Cys-567 and Cys-580 are disulfide-bonded.

It belongs to the acid sphingomyelinase family. The cofactor is Zn(2+).

The protein localises to the secreted. Converts sphingomyelin to ceramide. The protein is Sphingomyelin phosphodiesterase A (sgmA) of Dictyostelium discoideum (Social amoeba).